Here is a 503-residue protein sequence, read N- to C-terminus: Protein O-glucosyltransferase 3 (503 aa).

Positions 1–19 (MQALPLGLQLALLVAAGAG) are cleaved as a signal peptide. The Filamin repeat unit spans residues 19–129 (GARVSAPRSL…VAHSPYILKG (111 aa)). Residues N56 and N302 are each glycosylated (N-linked (GlcNAc...) asparagine). The Prevents secretion from ER motif lies at 500–503 (REEL).

It belongs to the KDELC family.

It is found in the endoplasmic reticulum lumen. It carries out the reaction L-seryl-[EGF-like domain protein] + UDP-alpha-D-glucose = 3-O-(beta-D-glucosyl)-L-seryl-[EGF-like domain protein] + UDP + H(+). It catalyses the reaction L-seryl-[EGF-like domain protein] + UDP-alpha-D-xylose = 3-O-(beta-D-xylosyl)-L-seryl-[EGF-like domain protein] + UDP + H(+). It functions in the pathway protein modification; protein glycosylation. Protein glucosyltransferase that catalyzes the transfer of glucose from UDP-glucose to a serine residue within the consensus sequence peptide C-X-N-T-X-G-S-F-X-C. Can also catalyze the transfer of xylose from UDP-xylose but less efficiently. Specifically targets extracellular EGF repeats of proteins such as NOTCH1, NOTCH3, FBN1, FBN2 and LTBP1. May regulate the transport of NOTCH1 and NOTCH3 to the plasma membrane and thereby the Notch signaling pathway. This chain is Protein O-glucosyltransferase 3 (Poglut3), found in Mus musculus (Mouse).